We begin with the raw amino-acid sequence, 162 residues long: MPDPARARRLAKRINTIVASAIEFEIKDPGLDGVTIVDTKVTADLHDATVFYTVMGRTLDDEPDYGAAAAALERAKGALRTMVGAGTGVRFTPTLTFTRDTTSDSVARMDELLARARAADADLARVRSGAKPAGEADPYRESGSGVEPGRDGSIGDDDQPEY.

Residues 124 to 162 (ARVRSGAKPAGEADPYRESGSGVEPGRDGSIGDDDQPEY) are disordered.

Belongs to the RbfA family. Monomer. Binds 30S ribosomal subunits, but not 50S ribosomal subunits or 70S ribosomes.

The protein resides in the cytoplasm. Its function is as follows. One of several proteins that assist in the late maturation steps of the functional core of the 30S ribosomal subunit. Associates with free 30S ribosomal subunits (but not with 30S subunits that are part of 70S ribosomes or polysomes). Required for efficient processing of 16S rRNA. May interact with the 5'-terminal helix region of 16S rRNA. This chain is Ribosome-binding factor A, found in Mycolicibacterium paratuberculosis (strain ATCC BAA-968 / K-10) (Mycobacterium paratuberculosis).